A 276-amino-acid chain; its full sequence is Large ribosomal subunit protein uL2 (276 aa).

Disordered stretches follow at residues 29–55 (PEKS…RHRG) and 219–276 (HVRG…RRTR). Positions 259–276 (TRNKKKQSSKLIVRRRTR) are enriched in basic residues.

The protein belongs to the universal ribosomal protein uL2 family. In terms of assembly, part of the 50S ribosomal subunit. Forms a bridge to the 30S subunit in the 70S ribosome.

Functionally, one of the primary rRNA binding proteins. Required for association of the 30S and 50S subunits to form the 70S ribosome, for tRNA binding and peptide bond formation. It has been suggested to have peptidyltransferase activity; this is somewhat controversial. Makes several contacts with the 16S rRNA in the 70S ribosome. This chain is Large ribosomal subunit protein uL2, found in Rippkaea orientalis (strain PCC 8801 / RF-1) (Cyanothece sp. (strain PCC 8801)).